Consider the following 362-residue polypeptide: Very-long-chain (3R)-3-hydroxyacyl-CoA dehydratase 3 (362 aa).

M1 carries the post-translational modification N-acetylmethionine. Over 1 to 149 the chain is Cytoplasmic; the sequence is MENQVLTPHV…ETLTSLKKGY (149 aa). Residues 5-94 enclose the CS domain; the sequence is VLTPHVYWAQ…KESQWWERLT (90 aa). T7 carries the phosphothreonine modification. Residues 111–136 are a coiled coil; it reads LDESDAEMELRAKEEEQLNKLRLESQ. Phosphoserine occurs at positions 114 and 135. Residues 150-170 traverse the membrane as a helical segment; that stretch reads LFMYNLVQFLGFSWIFVNMTV. The Lumenal portion of the chain corresponds to 171–189; it reads RFFILGKESFYDTFHTVAD. A helical membrane pass occupies residues 190 to 210; the sequence is MMYFCQMLAAVESINAAIGVT. Residues 211 to 212 are Cytoplasmic-facing; sequence KS. The chain crosses the membrane as a helical span at residues 213 to 233; the sequence is PVVPSLFQLLGRNFILFIIFG. Over 234 to 242 the chain is Lumenal; that stretch reads TMEEMQNKA. A helical transmembrane segment spans residues 243-263; the sequence is VVFFVFYIWSTVEIFRYPFYM. Topologically, residues 264–280 are cytoplasmic; that stretch reads LSCIDMDWKVLTWLRYT. Residues 281-301 traverse the membrane as a helical segment; sequence VWIPLYPMGCLAEAVSVIQSI. Residues Y286 and E293 contribute to the active site. Residues 302-325 lie on the Lumenal side of the membrane; sequence PVFNETGRFSFTLPYPVKIKVRFS. Residues 326–346 form a helical membrane-spanning segment; the sequence is FFLQIYLILLFLGLYVNFRYL. Residues 347 to 362 lie on the Cytoplasmic side of the membrane; sequence YKQRRRRFGQKKKKIH.

Belongs to the very long-chain fatty acids dehydratase HACD family. As to quaternary structure, may interact with enzymes of the ELO family (including ELOVL1); with those enzymes that mediate condensation, the first of the four steps of the reaction cycle responsible for fatty acids elongation, may be part of a larger fatty acids elongase complex. Interacts with RAC1. Associates with internalized insulin receptor/INSR complexes on Golgi/endosomal membranes; HACD3/PTPLAD1 together with ATIC and PRKAA2/AMPK2 is proposed to be part of a signaling network regulating INSR autophosphorylation and endocytosis.

It localises to the endoplasmic reticulum membrane. It carries out the reaction a very-long-chain (3R)-3-hydroxyacyl-CoA = a very-long-chain (2E)-enoyl-CoA + H2O. The catalysed reaction is (3R)-hydroxyhexadecanoyl-CoA = (2E)-hexadecenoyl-CoA + H2O. It participates in lipid metabolism; fatty acid biosynthesis. In terms of biological role, catalyzes the third of the four reactions of the long-chain fatty acids elongation cycle. This endoplasmic reticulum-bound enzymatic process, allows the addition of two carbons to the chain of long- and very long-chain fatty acids/VLCFAs per cycle. This enzyme catalyzes the dehydration of the 3-hydroxyacyl-CoA intermediate into trans-2,3-enoyl-CoA, within each cycle of fatty acid elongation. Thereby, it participates in the production of VLCFAs of different chain lengths that are involved in multiple biological processes as precursors of membrane lipids and lipid mediators. Involved in Rac1-signaling pathways leading to the modulation of gene expression. Promotes insulin receptor/INSR autophosphorylation and is involved in INSR internalization. The polypeptide is Very-long-chain (3R)-3-hydroxyacyl-CoA dehydratase 3 (Bos taurus (Bovine)).